The primary structure comprises 296 residues: MSRDLTAVQAKAATLVEALPWLATFHGRTVVIKYGGHAMIDPGLAASFAADVVFLRYAGLRPVVVHGGGPQIDAMLRRLGIEPVFAAGLRVTTPETMDVVRMVLVGQVQREVVGLLNAHGPFAVGVSGEDGRLFTAVRRSAVVDGHDVDLGLVGEITEVNPTVIQSLLDDGHVPVVSSIAGGVDSDGRRCVYNVNADTAAAALAVALGAEKLVVLTDVEGLFADWPNTDEVISRLTADELEKLLPGLAAGMIPKMEACLRAVRGGVAAAHVLDGRVPHAILLEIFTDEGVGTMVVP.

Substrate is bound by residues 68-69 (GG), Arg90, and Asn193.

This sequence belongs to the acetylglutamate kinase family. ArgB subfamily.

The protein resides in the cytoplasm. The catalysed reaction is N-acetyl-L-glutamate + ATP = N-acetyl-L-glutamyl 5-phosphate + ADP. It functions in the pathway amino-acid biosynthesis; L-arginine biosynthesis; N(2)-acetyl-L-ornithine from L-glutamate: step 2/4. Functionally, catalyzes the ATP-dependent phosphorylation of N-acetyl-L-glutamate. The chain is Acetylglutamate kinase from Acidothermus cellulolyticus (strain ATCC 43068 / DSM 8971 / 11B).